The sequence spans 149 residues: Urease accessory protein UreE (149 aa).

The protein belongs to the UreE family.

The protein localises to the cytoplasm. Its function is as follows. Involved in urease metallocenter assembly. Binds nickel. Probably functions as a nickel donor during metallocenter assembly. The chain is Urease accessory protein UreE from Ureaplasma urealyticum serovar 10 (strain ATCC 33699 / Western).